We begin with the raw amino-acid sequence, 744 residues long: Potassium-transporting ATPase ATP-binding subunit (744 aa).

4 helical membrane-spanning segments follow: residues 80-100 (PVMF…VMAL), 108-128 (AGFI…ANVA), 265-285 (LALT…TVTL), and 310-330 (VLVA…LSAI). Residue D363 is the 4-aspartylphosphate intermediate of the active site. Residues D400, E404, 435 to 442 (FSAQTRMS), and K457 each bind ATP. Mg(2+)-binding residues include D580 and D584. 3 helical membrane passes run 650 to 670 (FAII…LNVM), 678 to 698 (AVMS…PLAL), and 724 to 744 (LLLP…MGWV).

Belongs to the cation transport ATPase (P-type) (TC 3.A.3) family. Type IA subfamily. In terms of assembly, the system is composed of three essential subunits: KdpA, KdpB and KdpC.

The protein resides in the cell inner membrane. The catalysed reaction is K(+)(out) + ATP + H2O = K(+)(in) + ADP + phosphate + H(+). Functionally, part of the high-affinity ATP-driven potassium transport (or Kdp) system, which catalyzes the hydrolysis of ATP coupled with the electrogenic transport of potassium into the cytoplasm. This subunit is responsible for energy coupling to the transport system and for the release of the potassium ions to the cytoplasm. In Ralstonia nicotianae (strain ATCC BAA-1114 / GMI1000) (Ralstonia solanacearum), this protein is Potassium-transporting ATPase ATP-binding subunit.